The chain runs to 194 residues: Protein GrpE (194 aa).

Belongs to the GrpE family. As to quaternary structure, homodimer.

It is found in the cytoplasm. Its function is as follows. Participates actively in the response to hyperosmotic and heat shock by preventing the aggregation of stress-denatured proteins, in association with DnaK and GrpE. It is the nucleotide exchange factor for DnaK and may function as a thermosensor. Unfolded proteins bind initially to DnaJ; upon interaction with the DnaJ-bound protein, DnaK hydrolyzes its bound ATP, resulting in the formation of a stable complex. GrpE releases ADP from DnaK; ATP binding to DnaK triggers the release of the substrate protein, thus completing the reaction cycle. Several rounds of ATP-dependent interactions between DnaJ, DnaK and GrpE are required for fully efficient folding. This is Protein GrpE from Aliivibrio salmonicida (strain LFI1238) (Vibrio salmonicida (strain LFI1238)).